A 293-amino-acid chain; its full sequence is Transcription elongation factor S-II (293 aa).

The region spanning 4 to 81 (ADIRSAKAAL…KKWKADVSKG (78 aa)) is the TFIIS N-terminal domain. The disordered stretch occupies residues 81-123 (GRPLKTTTTTSSTPSKHADVGSQAQKQVQKQSSSGQRTFKSDN). The segment covering 100–116 (VGSQAQKQVQKQSSSGQ) has biased composition (low complexity). In terms of domain architecture, TFIIS central spans 133-248 (IRNNCIGLMY…HAQGAKPQKA (116 aa)). A TFIIS-type zinc finger spans residues 251–291 (DLFTCGKCKQKKVSYYQMQTRSADEPMTTFCECTVCGNRWK). Zn(2+)-binding residues include C255, C258, C283, and C286.

This sequence belongs to the TFS-II family.

Its subcellular location is the nucleus. In terms of biological role, necessary for efficient RNA polymerase II transcription elongation past template-encoded arresting sites. The arresting sites in DNA have the property of trapping a certain fraction of elongating RNA polymerases that pass through, resulting in locked ternary complexes. Cleavage of the nascent transcript by S-II allows the resumption of elongation from the new 3'-terminus. The sequence is that of Transcription elongation factor S-II (tfs1) from Schizosaccharomyces pombe (strain 972 / ATCC 24843) (Fission yeast).